Here is a 163-residue protein sequence, read N- to C-terminus: ATP synthase subunit b', chloroplastic (163 aa).

The helical transmembrane segment at 26 to 46 (ATLPLMAVQILLFMVILNAVF) threads the bilayer.

This sequence belongs to the ATPase B chain family. F-type ATPases have 2 components, F(1) - the catalytic core - and F(0) - the membrane proton channel. F(1) has five subunits: alpha(3), beta(3), gamma(1), delta(1), epsilon(1). F(0) has four main subunits: a(1), b(1), b'(1) and c(10-14). The alpha and beta chains form an alternating ring which encloses part of the gamma chain. F(1) is attached to F(0) by a central stalk formed by the gamma and epsilon chains, while a peripheral stalk is formed by the delta, b and b' chains.

It localises to the plastid. The protein localises to the chloroplast thylakoid membrane. Its function is as follows. F(1)F(0) ATP synthase produces ATP from ADP in the presence of a proton or sodium gradient. F-type ATPases consist of two structural domains, F(1) containing the extramembraneous catalytic core and F(0) containing the membrane proton channel, linked together by a central stalk and a peripheral stalk. During catalysis, ATP synthesis in the catalytic domain of F(1) is coupled via a rotary mechanism of the central stalk subunits to proton translocation. Functionally, component of the F(0) channel, it forms part of the peripheral stalk, linking F(1) to F(0). The b'-subunit is a diverged and duplicated form of b found in plants and photosynthetic bacteria. This Guillardia theta (Cryptophyte) protein is ATP synthase subunit b', chloroplastic.